The sequence spans 112 residues: Gonad-inhibiting hormone (112 aa).

Positions 1-31 (MVTRVGSGFSVQRVWLLLVIVVVLCGSVTQQ) are cleaved as a signal peptide. Disulfide bonds link Cys-41-Cys-78, Cys-58-Cys-74, and Cys-61-Cys-87. Ala-109 bears the Alanine amide mark.

Produced in the eyestalk X-organ sinus gland complex of male and female lobsters.

It localises to the secreted. In terms of biological role, inhibits vitellogenesis in female animals. Plays a prominent role in the regulation of reproduction/molting processes. The sequence is that of Gonad-inhibiting hormone from Homarus americanus (American lobster).